Consider the following 420-residue polypeptide: Na(+)/H(+) antiporter NhaA (420 aa).

Transmembrane regions (helical) follow at residues 34–54, 69–89, 107–127, 141–161, 168–190, 194–213, 271–291, 301–321, 342–362, and 374–394; these read TTGG…ANLG, LTIE…IAGL, LVPI…YTLF, IPMA…GAGL, FLLT…FFST, IWWL…MQHF, WSAG…HVSG, PISL…ITLG, IIAV…MTDL, and AKAS…AMLH.

Belongs to the NhaA Na(+)/H(+) (TC 2.A.33) antiporter family.

Its subcellular location is the cell membrane. It carries out the reaction Na(+)(in) + 2 H(+)(out) = Na(+)(out) + 2 H(+)(in). Na(+)/H(+) antiporter that extrudes sodium in exchange for external protons. The sequence is that of Na(+)/H(+) antiporter NhaA from Cutibacterium acnes (strain DSM 16379 / KPA171202) (Propionibacterium acnes).